A 544-amino-acid chain; its full sequence is Chaperonin GroEL (544 aa).

Residues 29 to 32, Lys50, 86 to 90, Gly414, and Asp494 each bind ATP; these read TLGP and DGTTT.

It belongs to the chaperonin (HSP60) family. In terms of assembly, forms a cylinder of 14 subunits composed of two heptameric rings stacked back-to-back. Interacts with the co-chaperonin GroES.

It localises to the cytoplasm. The enzyme catalyses ATP + H2O + a folded polypeptide = ADP + phosphate + an unfolded polypeptide.. Its function is as follows. Together with its co-chaperonin GroES, plays an essential role in assisting protein folding. The GroEL-GroES system forms a nano-cage that allows encapsulation of the non-native substrate proteins and provides a physical environment optimized to promote and accelerate protein folding. This Amoebophilus asiaticus (strain 5a2) protein is Chaperonin GroEL.